A 220-amino-acid chain; its full sequence is Ribose-5-phosphate isomerase A (220 aa).

Substrate contacts are provided by residues 25–28, 80–83, and 93–96; these read TGST, DGAD, and KGGG. The active-site Proton acceptor is Glu102. Lys120 lines the substrate pocket.

This sequence belongs to the ribose 5-phosphate isomerase family. In terms of assembly, homodimer.

It catalyses the reaction aldehydo-D-ribose 5-phosphate = D-ribulose 5-phosphate. It functions in the pathway carbohydrate degradation; pentose phosphate pathway; D-ribose 5-phosphate from D-ribulose 5-phosphate (non-oxidative stage): step 1/1. In terms of biological role, catalyzes the reversible conversion of ribose-5-phosphate to ribulose 5-phosphate. In Bacillus cereus (strain ATCC 10987 / NRS 248), this protein is Ribose-5-phosphate isomerase A.